A 465-amino-acid chain; its full sequence is VGFKAGVKDYKLTYYTPDYETKDTDILAAFRVTPQPGVPPEEAGAAVAAESSTGTWTTVWTDGLTSLDRYKGRCYHIEPVAGEENQYIAYVAYPLDLFEEGSVTNMFTSIVGNVFGFKALRALRLEDLRIPISYIKTFQGPPHGIQVERDKLNKYGRPLLGCTIKPKLGLSAKNYGRAVYECLRGGLDFTKDDENVNSQPFMRWRDRFCFCAEALYKAQAETGEIKGHYLNATAGTCEEMIKRAVFARELGVPIVMHDYLTGGFTANTTLAHYCRDNGLLLHIHRAMHAVIDRQKNHGMHFRVLAKALRLSGGDHIHAGTVVGKLEGEREITLGFVDLLRDDFIEKDRSRGIYFTQDWVSLPGVLPVASGGIHVWHMPALTEIFGDDSVLQFGGGTLGHPWGNAPGAVANRVALEACVQARNEGRDLAREGNEIIREASKWSPELAAACEVWKEIKFEFPAMDTL.

Lys-4 carries the post-translational modification N6,N6,N6-trimethyllysine. The substrate site is built by Asn-113 and Thr-163. Lys-165 functions as the Proton acceptor in the catalytic mechanism. Lys-167 contacts substrate. Mg(2+) is bound by residues Lys-191, Asp-193, and Glu-194. At Lys-191 the chain carries N6-carboxylysine. His-284 serves as the catalytic Proton acceptor. 3 residues coordinate substrate: Arg-285, His-317, and Ser-369.

This sequence belongs to the RuBisCO large chain family. Type I subfamily. As to quaternary structure, heterohexadecamer of 8 large chains and 8 small chains; disulfide-linked. The disulfide link is formed within the large subunit homodimers. Mg(2+) serves as cofactor. In terms of processing, the disulfide bond which can form in the large chain dimeric partners within the hexadecamer appears to be associated with oxidative stress and protein turnover.

It localises to the plastid. Its subcellular location is the chloroplast. It carries out the reaction 2 (2R)-3-phosphoglycerate + 2 H(+) = D-ribulose 1,5-bisphosphate + CO2 + H2O. The enzyme catalyses D-ribulose 1,5-bisphosphate + O2 = 2-phosphoglycolate + (2R)-3-phosphoglycerate + 2 H(+). In terms of biological role, ruBisCO catalyzes two reactions: the carboxylation of D-ribulose 1,5-bisphosphate, the primary event in carbon dioxide fixation, as well as the oxidative fragmentation of the pentose substrate in the photorespiration process. Both reactions occur simultaneously and in competition at the same active site. The chain is Ribulose bisphosphate carboxylase large chain from Cassia fistula (Golden shower tree).